The chain runs to 260 residues: Cytochrome c oxidase subunit 2 (260 aa).

The Mitochondrial intermembrane segment spans residues 1–43; the sequence is MILRSLSCRFLTIALCDAAEPWQLGFQDAATPMMQGIIDLHHD. A helical membrane pass occupies residues 44-64; sequence IFFFLILILVFVLWMLVRALW. At 65–84 the chain is on the mitochondrial matrix side; that stretch reads HFNEQTNPIPQRIVHGTTIE. Residues 85 to 105 form a helical membrane-spanning segment; sequence IIWTIFPSVILLFIAIPSFAL. Residues 106 to 260 lie on the Mitochondrial intermembrane side of the membrane; that stretch reads LYSMDGVLVD…VSNQLILQTN (155 aa). 6 residues coordinate Cu cation: histidine 189, cysteine 224, glutamate 226, cysteine 228, histidine 232, and methionine 235. Glutamate 226 is a binding site for Mg(2+).

It belongs to the cytochrome c oxidase subunit 2 family. In terms of assembly, component of the cytochrome c oxidase (complex IV, CIV), a multisubunit enzyme composed of a catalytic core of 3 subunits and several supernumerary subunits. The complex exists as a monomer or a dimer and forms supercomplexes (SCs) in the inner mitochondrial membrane with ubiquinol-cytochrome c oxidoreductase (cytochrome b-c1 complex, complex III, CIII). Requires Cu cation as cofactor.

Its subcellular location is the mitochondrion inner membrane. The catalysed reaction is 4 Fe(II)-[cytochrome c] + O2 + 8 H(+)(in) = 4 Fe(III)-[cytochrome c] + 2 H2O + 4 H(+)(out). Functionally, component of the cytochrome c oxidase, the last enzyme in the mitochondrial electron transport chain which drives oxidative phosphorylation. The respiratory chain contains 3 multisubunit complexes succinate dehydrogenase (complex II, CII), ubiquinol-cytochrome c oxidoreductase (cytochrome b-c1 complex, complex III, CIII) and cytochrome c oxidase (complex IV, CIV), that cooperate to transfer electrons derived from NADH and succinate to molecular oxygen, creating an electrochemical gradient over the inner membrane that drives transmembrane transport and the ATP synthase. Cytochrome c oxidase is the component of the respiratory chain that catalyzes the reduction of oxygen to water. Electrons originating from reduced cytochrome c in the intermembrane space (IMS) are transferred via the dinuclear copper A center (CU(A)) of subunit 2 and heme A of subunit 1 to the active site in subunit 1, a binuclear center (BNC) formed by heme A3 and copper B (CU(B)). The BNC reduces molecular oxygen to 2 water molecules using 4 electrons from cytochrome c in the IMS and 4 protons from the mitochondrial matrix. This Triticum aestivum (Wheat) protein is Cytochrome c oxidase subunit 2 (COX2).